The primary structure comprises 340 residues: Spermidine synthase 2 (340 aa).

The tract at residues M1 to P41 is disordered. The residue at position 2 (S2) is an N-acetylserine. Residues P49–S286 form the PABS domain. Q80 contributes to the S-adenosyl 3-(methylsulfanyl)propylamine binding site. Y110 lines the putrescine pocket. Residues Q111, D135, E155, D186–G187, and D205 contribute to the S-adenosyl 3-(methylsulfanyl)propylamine site. Residue D205 is the Proton acceptor of the active site. Residues D205–D208 and Y274 contribute to the putrescine site.

This sequence belongs to the spermidine/spermine synthase family. Heterodimer. Component of a multiprotein complex. Interacts with SPMS and SPDSYN1.

It catalyses the reaction S-adenosyl 3-(methylsulfanyl)propylamine + putrescine = S-methyl-5'-thioadenosine + spermidine + H(+). It participates in amine and polyamine biosynthesis; spermidine biosynthesis; spermidine from putrescine: step 1/1. This chain is Spermidine synthase 2 (SPDSYN2), found in Arabidopsis thaliana (Mouse-ear cress).